Here is a 493-residue protein sequence, read N- to C-terminus: Transcript termination protein A18 (493 aa).

The region spanning 100–256 is the Helicase ATP-binding domain; that stretch reads MIELKRPLYI…NSIINIAKLS (157 aa). 113–120 provides a ligand contact to ATP; it reads LACGFGKT. Positions 206 to 209 match the DESH box motif; sequence DESH.

It belongs to the helicase family. Poxviruses subfamily. Interacts with G2. Might be part of a transcription complex composed at least of G2, A18, and H5.

The protein resides in the virion. Functionally, DNA helicase which seems to act as a postreplicative transcription termination factor. Involved in ATP-dependent release of nascent RNA. Forms a stable complex with single-stranded DNA, and to a lesser extent RNA. In Camelus, this protein is Transcript termination protein A18.